Here is a 1213-residue protein sequence, read N- to C-terminus: SWI/SNF complex subunit SMARCC2 (1213 aa).

Residues 1–274 (MAVRKKDGGP…PVSRRKKISA (274 aa)) are marR-like, BRCT and chromo domains module. The 127-residue stretch at 10-136 (PNVKYYEAAD…IEKSLVQNNC (127 aa)) folds into the MarR-like domain. One can recognise a BRCT; N-terminus domain in the interval 140–183 (PNIFLCPEIEPKLLGKLKDIVKRHQGTISEDKSNASHVVYPVPG). A Chromo domain is found at 189–217 (EWVRPVMKRDKQVLLHWGYYPDSYDTWIP). Residues 233 to 257 (KPRKVHAKWILDTDTFNEWMNEEDY) enclose the BRCT; C-terminus domain. Residues 256–413 (DYEVSDDKSP…GEQTKNPDLH (158 aa)) form a disordered region. Over residues 275 to 284 (KTLTDEVNSP) the composition is skewed to polar residues. S283, S286, S302, S304, and S306 each carry phosphoserine. K312 is modified (N6-(ADP-ribosyl)lysine). N6-acetyllysine is present on K326. Over residues 331–344 (HREEEQEDLTKDMD) the composition is skewed to basic and acidic residues. Residues S347 and S387 each carry the phosphoserine modification. Residues 379-398 (DLDEQDDESMETTGKDEDEN) show a composition bias toward acidic residues. Residues 424–521 (IIIPSYAAWF…YQVDAESRPT (98 aa)) enclose the SWIRM domain. Residues K564, K566, K568, and K592 each participate in a glycyl lysine isopeptide (Lys-Gly) (interchain with G-Cter in SUMO2) cross-link. Positions 596–647 (SATREWTEQETLLLLEALEMYKDDWNKVSEHVGSRTQDECILHFLRLPIEDP) constitute an SANT domain. A Glycyl lysine isopeptide (Lys-Gly) (interchain with G-Cter in SUMO2) cross-link involves residue K704. The interval 724-848 (KVTGKADPAF…AEPEGERKTK (125 aa)) is disordered. Over residues 747 to 777 (EPERIEESGTEEARPEGQAADEKKEPKEPRE) the composition is skewed to basic and acidic residues. K787 is covalently cross-linked (Glycyl lysine isopeptide (Lys-Gly) (interchain with G-Cter in SUMO2)). The span at 788-848 (EEISEVPKKD…AEPEGERKTK (61 aa)) shows a compositional bias: basic and acidic residues. A Phosphoserine modification is found at S813. Residue K848 forms a Glycyl lysine isopeptide (Lys-Gly) (interchain with G-Cter in SUMO2) linkage. The stretch at 907-934 (EELETIMDREREALEYQRQQLLADRQAF) forms a coiled coil. 2 disordered regions span residues 947–1073 (RQQH…HPGV) and 1181–1213 (LPSA…PPPQ). Residues 949–962 (QHFQQMHQQQQQQP) are compositionally biased toward low complexity. Residues 963 to 974 (PTLPPGSQPIPP) are compositionally biased toward pro residues. The segment covering 975–1033 (TGAAGPPTVHGLAVPPAAVASAPPGSGAPPGSLGPSEQIGQAGTTAGPQQPQQAGAPQP) has biased composition (low complexity). Composition is skewed to pro residues over residues 1034–1060 (GAVP…PPSM) and 1185–1201 (SPLP…PTAP).

The protein belongs to the SMARCC family. As to quaternary structure, component of the multiprotein chromatin-remodeling complexes SWI/SNF: SWI/SNF-A (BAF), SWI/SNF-B (PBAF) and related complexes. The canonical complex contains a catalytic subunit (either SMARCA4/BRG1/BAF190A or SMARCA2/BRM/BAF190B) and at least SMARCE1, ACTL6A/BAF53, SMARCC1/BAF155, SMARCC2/BAF170, and SMARCB1/SNF5/BAF47. Other subunits specific to each of the complexes may also be present permitting several possible combinations developmentally and tissue specific. Component of the BAF complex, which includes at least actin (ACTB), ARID1A/BAF250A, ARID1B/BAF250B, SMARCA2/BRM, SMARCA4/BRG1, ACTL6A/BAF53, ACTL6B/BAF53B, SMARCE1/BAF57, SMARCC1/BAF155, SMARCC2/BAF170, SMARCB1/SNF5/INI1, and one or more SMARCD1/BAF60A, SMARCD2/BAF60B, or SMARCD3/BAF60C. In muscle cells, the BAF complex also contains DPF3. Component of neural progenitors-specific chromatin remodeling complex (npBAF complex) composed of at least, ARID1A/BAF250A or ARID1B/BAF250B, SMARCD1/BAF60A, SMARCD3/BAF60C, SMARCA2/BRM/BAF190B, SMARCA4/BRG1/BAF190A, SMARCB1/BAF47, SMARCC1/BAF155, SMARCE1/BAF57, SMARCC2/BAF170, PHF10/BAF45A, ACTL6A/BAF53A and actin. Component of neuron-specific chromatin remodeling complex (nBAF complex) composed of at least, ARID1A/BAF250A or ARID1B/BAF250B, SMARCD1/BAF60A, SMARCD3/BAF60C, SMARCA2/BRM/BAF190B, SMARCA4/BRG1/BAF190A, SMARCB1/BAF47, SMARCC1/BAF155, SMARCE1/BAF57, SMARCC2/BAF170, DPF1/BAF45B, DPF3/BAF45C, ACTL6B/BAF53B and actin. Component of the SWI/SNF-B (PBAF) chromatin remodeling complex, at least composed of SMARCA4/BRG1, SMARCB1/BAF47/SNF5, ACTL6A/BAF53A or ACTL6B/BAF53B, SMARCE1/BAF57, SMARCD1/BAF60A, SMARCD2/BAF60B, perhaps SMARCD3/BAF60C, SMARCC1/BAF155, SMARCC2/BAF170, PBRM1/BAF180, ARID2/BAF200 and actin. May also interact with the SIN3A histone deacetylase transcription repressor complex in conjunction with SMARCA2 and SMARCA4. Interacts with SMARD1. Interacts with KDM6B. Interaction with RCOR1. Interacts with DPF2. Interacts with ERCC6. Interacts with FOS. In terms of processing, mono-ADP-ribosylation at Lys-312 by SIRT6 promotes recruitment to the enhancer region of the Heme oxygenase-1 (HO-1) locus, leading to transcription activation of the locus.

It is found in the nucleus. Its function is as follows. Involved in transcriptional activation and repression of select genes by chromatin remodeling (alteration of DNA-nucleosome topology). Component of SWI/SNF chromatin remodeling complexes that carry out key enzymatic activities, changing chromatin structure by altering DNA-histone contacts within a nucleosome in an ATP-dependent manner. Can stimulate the ATPase activity of the catalytic subunit of these complexes. May be required for CoREST dependent repression of neuronal specific gene promoters in non-neuronal cells. Belongs to the neural progenitors-specific chromatin remodeling complex (npBAF complex) and the neuron-specific chromatin remodeling complex (nBAF complex). During neural development a switch from a stem/progenitor to a postmitotic chromatin remodeling mechanism occurs as neurons exit the cell cycle and become committed to their adult state. The transition from proliferating neural stem/progenitor cells to postmitotic neurons requires a switch in subunit composition of the npBAF and nBAF complexes. As neural progenitors exit mitosis and differentiate into neurons, npBAF complexes which contain ACTL6A/BAF53A and PHF10/BAF45A, are exchanged for homologous alternative ACTL6B/BAF53B and DPF1/BAF45B or DPF3/BAF45C subunits in neuron-specific complexes (nBAF). The npBAF complex is essential for the self-renewal/proliferative capacity of the multipotent neural stem cells. The nBAF complex along with CREST plays a role regulating the activity of genes essential for dendrite growth. Critical regulator of myeloid differentiation, controlling granulocytopoiesis and the expression of genes involved in neutrophil granule formation. The polypeptide is SWI/SNF complex subunit SMARCC2 (Smarcc2) (Mus musculus (Mouse)).